A 505-amino-acid chain; its full sequence is Putative heat shock protein HSP 90-beta 4 (505 aa).

Residues Asn-22, Lys-83, and Phe-109 each contribute to the ATP site. Positions 197–248 (EKEISDDEEEKGEKEEEDKDDKEKPKTEDVGSDEEDDTDKNNKKKTKKIKEK) are disordered. Acidic residues predominate over residues 200 to 216 (ISDDEEEKGEKEEEDKD).

Belongs to the heat shock protein 90 family. As to quaternary structure, homodimer.

It localises to the cytoplasm. Functionally, putative molecular chaperone that may promote the maturation, structural maintenance and proper regulation of specific target proteins. This chain is Putative heat shock protein HSP 90-beta 4 (HSP90AB4P), found in Homo sapiens (Human).